We begin with the raw amino-acid sequence, 741 residues long: HSP-interacting protein (741 aa).

TPR repeat units lie at residues 26–59 (SREL…LPAG), 65–100 (AHLR…VPRY), and 102–134 (RALL…EPGN). Residues 168-270 (ASAKGEERKK…GESKQQKHSA (103 aa)) form a disordered region. Residues 171 to 184 (KGEERKKSRNKRFD) are compositionally biased toward basic and acidic residues. Polar residues predominate over residues 201 to 218 (SASTEKQAGPRQTNGTGN). The span at 219–247 (HQDHTEDSESNGLEKLEQSTETGEKDMGK) shows a compositional bias: basic and acidic residues. The span at 248–258 (KRGAHAAGKKP) shows a compositional bias: basic residues. The region spanning 285–364 (MKDVKLVFGE…VPIRFYVVEV (80 aa)) is the PB1 domain. TPR repeat units lie at residues 496–530 (EFIL…KSDF), 532–557 (EGLI…ACKI), 558–591 (NMET…RLKG), and 628–663 (SHIN…AMEK).

Interacts (via C-terminus) with O1. Interacts (via C-terminus) with OP10 (via N-terminus).

Functionally, acts as a co-chaperone for HSP90 and is required for proper folding of the myosin motor domain. The chain is HSP-interacting protein from Zea mays (Maize).